A 251-amino-acid chain; its full sequence is Chloride intracellular channel protein 5 (251 aa).

A required for insertion into the membrane region spans residues 1–98; it reads MTDSATANGD…EEFLEETLTP (98 aa). The short motif at 32 to 35 is the G-site element; that stretch reads CPFS. A helical transmembrane segment spans residues 34–54; the sequence is FSQRLFMILWLKGVVFNVTTV. In terms of domain architecture, GST C-terminal spans 101–241; that stretch reads YPKLAARHRE…AADSEIELAY (141 aa).

This sequence belongs to the chloride channel CLIC family. In terms of assembly, component of a multimeric complex consisting of several cytoskeletal proteins, including actin, ezrin, alpha-actinin, gelsolin, and IQGAP1. Interacts with AKAP9. Interacts with TPRN. TPRN, CLIC5 and PTPQR form concentric rings at the base of stereocilia and may form a complex. Interacts with EZR, MYO6 and RDX; the proteins may work together as a complex to stabilize linkages between the plasma membrane and subjacent actin cytoskeleton at the stereocilium base. As to expression, detected in cochlea, in cochlear and vestibular hair cell bundles in the organ of Corti (at protein level). Expressed neonatal and adult cardiomyocytes (at protein level).

The protein localises to the golgi apparatus. The protein resides in the cytoplasm. It localises to the cytoskeleton. It is found in the microtubule organizing center. Its subcellular location is the centrosome. The protein localises to the cell cortex. The protein resides in the membrane. It localises to the apical cell membrane. It is found in the mitochondrion. Its subcellular location is the cell projection. The protein localises to the stereocilium. The enzyme catalyses Na(+)(in) = Na(+)(out). The catalysed reaction is K(+)(in) = K(+)(out). It carries out the reaction chloride(in) = chloride(out). With respect to regulation, inhibited by F-actin. In terms of biological role, in the soluble state, catalyzes glutaredoxin-like thiol disulfide exchange reactions with reduced glutathione as electron donor. Can insert into membranes and form non-selective ion channels almost equally permeable to Na(+), K(+) and Cl(-). Required for normal hearing. It is necessary for the formation of stereocilia in the inner ear and normal development of the organ of Corti. May play a role in the regulation of transepithelial ion absorption and secretion. Is required for the development and/or maintenance of the proper glomerular endothelial cell and podocyte architecture. Plays a role in formation of the lens suture in the eye, which is important for normal optical properties of the lens. This chain is Chloride intracellular channel protein 5 (Clic5), found in Rattus norvegicus (Rat).